The chain runs to 427 residues: MLDIKIIRKTPEECETRLRKKDPKISLEPVLSLDKEVRQLKTDSETLQAQRRLLSQDIHKAKTQGVDATNLIQEVETLAADLEKIEQHLDQKNAQLHELLSHLPNYPADDIPVSEDKAGNQVIKSVGDLPIFSFPPKHHLELNQELDILDFQAAAKTTGSGWPAYKNRGVLLEWALLTYMLQKQAAHGFQLWLPPLLVKKEILFGSGQIPKFDGQYYRVEDGEQYLYLIPTAEVVLNGFRSQDILTEKELPLYYAACTPCFRREAGAAGAQERGLVRVHQFHKVEMFAFTTPNQDDIAYEKMLSIVEEMLTELKLPYRLSLLSTGDMSFTASKTIDAEVWLPGQKAFYEVSSISQCTDFQSRRSGTRYKDSQGKLQFVHTLNGSGLATPRLLVAILENNQQADGSVVIPEVLRPYLGGLEILLPKDQ.

Residue 231-233 (TAE) coordinates L-serine. Residues 262-264 (RRE) and Val278 each bind ATP. Glu285 serves as a coordination point for L-serine. Position 349–352 (349–352 (EVSS)) interacts with ATP. Ser384 contributes to the L-serine binding site.

This sequence belongs to the class-II aminoacyl-tRNA synthetase family. Type-1 seryl-tRNA synthetase subfamily. Homodimer. The tRNA molecule binds across the dimer.

The protein resides in the cytoplasm. It catalyses the reaction tRNA(Ser) + L-serine + ATP = L-seryl-tRNA(Ser) + AMP + diphosphate + H(+). The catalysed reaction is tRNA(Sec) + L-serine + ATP = L-seryl-tRNA(Sec) + AMP + diphosphate + H(+). It functions in the pathway aminoacyl-tRNA biosynthesis; selenocysteinyl-tRNA(Sec) biosynthesis; L-seryl-tRNA(Sec) from L-serine and tRNA(Sec): step 1/1. In terms of biological role, catalyzes the attachment of serine to tRNA(Ser). Is also able to aminoacylate tRNA(Sec) with serine, to form the misacylated tRNA L-seryl-tRNA(Sec), which will be further converted into selenocysteinyl-tRNA(Sec). This chain is Serine--tRNA ligase, found in Chlamydia pneumoniae (Chlamydophila pneumoniae).